The sequence spans 310 residues: ADP-L-glycero-D-manno-heptose-6-epimerase (310 aa).

Residues F10–I11, D31–N32, K38, K53, E75–S79, and N92 each bind NADP(+). Residue Y140 is the Proton acceptor of the active site. K144 lines the NADP(+) pocket. N169 is a binding site for substrate. Residues V170 and K178 each coordinate NADP(+). The active-site Proton acceptor is the K178. Substrate-binding positions include S180, H187, F201–S204, R209, and Y272.

Belongs to the NAD(P)-dependent epimerase/dehydratase family. HldD subfamily. Homopentamer. The cofactor is NADP(+).

It catalyses the reaction ADP-D-glycero-beta-D-manno-heptose = ADP-L-glycero-beta-D-manno-heptose. It participates in nucleotide-sugar biosynthesis; ADP-L-glycero-beta-D-manno-heptose biosynthesis; ADP-L-glycero-beta-D-manno-heptose from D-glycero-beta-D-manno-heptose 7-phosphate: step 4/4. In terms of biological role, catalyzes the interconversion between ADP-D-glycero-beta-D-manno-heptose and ADP-L-glycero-beta-D-manno-heptose via an epimerization at carbon 6 of the heptose. The sequence is that of ADP-L-glycero-D-manno-heptose-6-epimerase from Salmonella heidelberg (strain SL476).